Consider the following 272-residue polypeptide: Ribosomal RNA small subunit methyltransferase A (272 aa).

6 residues coordinate S-adenosyl-L-methionine: Asn-27, Leu-29, Gly-54, Glu-75, Asp-97, and Asn-117.

This sequence belongs to the class I-like SAM-binding methyltransferase superfamily. rRNA adenine N(6)-methyltransferase family. RsmA subfamily.

The protein resides in the cytoplasm. The enzyme catalyses adenosine(1518)/adenosine(1519) in 16S rRNA + 4 S-adenosyl-L-methionine = N(6)-dimethyladenosine(1518)/N(6)-dimethyladenosine(1519) in 16S rRNA + 4 S-adenosyl-L-homocysteine + 4 H(+). Functionally, specifically dimethylates two adjacent adenosines (A1518 and A1519) in the loop of a conserved hairpin near the 3'-end of 16S rRNA in the 30S particle. May play a critical role in biogenesis of 30S subunits. This chain is Ribosomal RNA small subunit methyltransferase A, found in Malacoplasma penetrans (strain HF-2) (Mycoplasma penetrans).